Consider the following 440-residue polypeptide: uncharacterized protein (440 aa).

2 disordered regions span residues 49-81 (CPPAQSHGHSSLRTNLNSSPPRCPQNPGTEPSL) and 162-295 (LPKP…CASE). A compositionally biased stretch (polar residues) spans 55 to 80 (HGHSSLRTNLNSSPPRCPQNPGTEPS). Basic and acidic residues predominate over residues 249–266 (YREELSNTKSRFSEDKGS). Residues 274–284 (SSNSSEPGLPG) are compositionally biased toward low complexity.

It belongs to the tymoviridae protein p69 family.

This is an uncharacterized protein from Erysimum latent virus (ELV).